The chain runs to 193 residues: Large ribosomal subunit protein eL18 (193 aa).

Residues 158 to 193 (HFGAAGVPGSHAKPHVSSRGKERQRSSKRRHAFRHK) form a disordered region. A compositionally biased stretch (basic residues) spans 183-193 (SSKRRHAFRHK).

It belongs to the eukaryotic ribosomal protein eL18 family.

It localises to the cytoplasm. The chain is Large ribosomal subunit protein eL18 (RPL18-A) from Trypanosoma brucei brucei (strain 927/4 GUTat10.1).